The primary structure comprises 92 residues: Small ribosomal subunit protein uS19 (92 aa).

Belongs to the universal ribosomal protein uS19 family.

Functionally, protein S19 forms a complex with S13 that binds strongly to the 16S ribosomal RNA. The protein is Small ribosomal subunit protein uS19 of Aliivibrio salmonicida (strain LFI1238) (Vibrio salmonicida (strain LFI1238)).